The following is a 399-amino-acid chain: Imidazolonepropionase (399 aa).

Fe(3+)-binding residues include His74 and His76. 2 residues coordinate Zn(2+): His74 and His76. The 4-imidazolone-5-propanoate site is built by Arg83, Tyr146, and His176. Tyr146 is a binding site for N-formimidoyl-L-glutamate. A Fe(3+)-binding site is contributed by His238. His238 contacts Zn(2+). 4-imidazolone-5-propanoate is bound at residue Gln241. Asp312 serves as a coordination point for Fe(3+). Position 312 (Asp312) interacts with Zn(2+). The N-formimidoyl-L-glutamate site is built by Asn314 and Gly316. Ser317 serves as a coordination point for 4-imidazolone-5-propanoate.

This sequence belongs to the metallo-dependent hydrolases superfamily. HutI family. Zn(2+) serves as cofactor. It depends on Fe(3+) as a cofactor.

It is found in the cytoplasm. The catalysed reaction is 4-imidazolone-5-propanoate + H2O = N-formimidoyl-L-glutamate. It functions in the pathway amino-acid degradation; L-histidine degradation into L-glutamate; N-formimidoyl-L-glutamate from L-histidine: step 3/3. Its function is as follows. Catalyzes the hydrolytic cleavage of the carbon-nitrogen bond in imidazolone-5-propanoate to yield N-formimidoyl-L-glutamate. It is the third step in the universal histidine degradation pathway. This is Imidazolonepropionase from Deinococcus deserti (strain DSM 17065 / CIP 109153 / LMG 22923 / VCD115).